Here is a 416-residue protein sequence, read N- to C-terminus: Lipoyl synthase, mitochondrial (416 aa).

The transit peptide at M1–Y33 directs the protein to the mitochondrion. Positions 132, 137, 143, 163, 167, 170, and 378 each coordinate [4Fe-4S] cluster. Residues D148 to L367 form the Radical SAM core domain. Residues G396 to R416 form a disordered region. Positions D405 to R416 are enriched in polar residues.

This sequence belongs to the radical SAM superfamily. Lipoyl synthase family. [4Fe-4S] cluster serves as cofactor.

It is found in the mitochondrion. The enzyme catalyses [[Fe-S] cluster scaffold protein carrying a second [4Fe-4S](2+) cluster] + N(6)-octanoyl-L-lysyl-[protein] + 2 oxidized [2Fe-2S]-[ferredoxin] + 2 S-adenosyl-L-methionine + 4 H(+) = [[Fe-S] cluster scaffold protein] + N(6)-[(R)-dihydrolipoyl]-L-lysyl-[protein] + 4 Fe(3+) + 2 hydrogen sulfide + 2 5'-deoxyadenosine + 2 L-methionine + 2 reduced [2Fe-2S]-[ferredoxin]. It functions in the pathway protein modification; protein lipoylation via endogenous pathway; protein N(6)-(lipoyl)lysine from octanoyl-[acyl-carrier-protein]: step 2/2. Catalyzes the radical-mediated insertion of two sulfur atoms into the C-6 and C-8 positions of the octanoyl moiety bound to the lipoyl domains of lipoate-dependent enzymes, thereby converting the octanoylated domains into lipoylated derivatives. The chain is Lipoyl synthase, mitochondrial from Penicillium rubens (strain ATCC 28089 / DSM 1075 / NRRL 1951 / Wisconsin 54-1255) (Penicillium chrysogenum).